Here is a 359-residue protein sequence, read N- to C-terminus: uncharacterized protein (359 aa).

The N-terminal stretch at 1-15 (MSIVLAIDTATAAVT) is a signal peptide. In terms of domain architecture, N-acetyltransferase spans 212-359 (IVIGTLTPAD…DAYLMRREAQ (148 aa)).

This is an uncharacterized protein from Mycobacterium leprae (strain TN).